The following is a 170-amino-acid chain: Alpha-crystallin A chain (170 aa).

Met-1 carries the post-translational modification N-acetylmethionine. The required for complex formation with BFSP1 and BFSP2 stretch occupies residues 1–63; sequence MDVTIQHPWF…RTVLDSGISE (63 aa). Gln-6 carries the deamidated glutamine; partial modification. Residue Ser-45 is modified to Phosphoserine. Gln-50 is subject to Deamidated glutamine; partial. The region spanning 52 to 161 is the sHSP domain; the sequence is LFRTVLDSGI…SERTIPVSRE (110 aa). 2 positions are modified to N6-acetyllysine: Lys-70 and Lys-99. His-100 provides a ligand contact to Zn(2+). Asn-101 bears the Deamidated asparagine; partial mark. Residues Glu-102, His-107, and His-151 each coordinate Zn(2+). The segment at 144–170 is disordered; it reads PKIVDPSHSERTIPVSREEKPSSAPSS. The span at 148 to 164 shows a compositional bias: basic and acidic residues; it reads DPSHSERTIPVSREEKP. O-linked (GlcNAc) serine glycosylation occurs at Ser-159.

It belongs to the small heat shock protein (HSP20) family. As to quaternary structure, heteromer composed of three CRYAA and one CRYAB subunits. Inter-subunit bridging via zinc ions enhances stability, which is crucial as there is no protein turn over in the lens. Can also form homodimers and homotetramers (dimers of dimers) which serve as the building blocks of homooligomers. Within homooligomers, the zinc-binding motif is created from residues of 3 different molecules. His-100 and Glu-102 from one molecule are ligands of the zinc ion, and His-107 and His-151 residues from additional molecules complete the site with tetrahedral coordination geometry. Part of a complex required for lens intermediate filament formation composed of BFSP1, BFSP2 and CRYAA. In terms of processing, acetylation at Lys-70 may increase chaperone activity. Undergoes age-dependent proteolytical cleavage at the C-terminus.

Its subcellular location is the cytoplasm. The protein resides in the nucleus. In terms of biological role, contributes to the transparency and refractive index of the lens. Acts as a chaperone, preventing aggregation of various proteins under a wide range of stress conditions. Required for the correct formation of lens intermediate filaments as part of a complex composed of BFSP1, BFSP2 and CRYAA. This is Alpha-crystallin A chain (CRYAA) from Choloepus hoffmanni (Hoffmann's two-fingered sloth).